Consider the following 127-residue polypeptide: Protein SPIRAL1-like 4 (127 aa).

Residues 1–127 (MGKARGVNSG…FGSGPCGSDK (127 aa)) form a disordered region. A compositionally biased stretch (low complexity) spans 39–48 (TTTTTTTTTT). S80 is subject to Phosphoserine. Polar residues predominate over residues 80 to 94 (SPNNYYRSDGQNCGN).

This sequence belongs to the SPIRAL1 family. Ubiquitous.

Acts redundantly with SPR1 in maintaining the cortical microtubules organization essential for anisotropic cell growth. This Arabidopsis thaliana (Mouse-ear cress) protein is Protein SPIRAL1-like 4 (SP1L4).